The sequence spans 215 residues: Transmembrane protein 267 (215 aa).

3 helical membrane passes run 77–97 (FGEIILAGFLASVIDIDHFLL), 114–134 (FLHCSTVIPTVVLTLKFTMHF), and 178–198 (FWLYVIITSSLPHICSFVMYF).

Its subcellular location is the membrane. The sequence is that of Transmembrane protein 267 (TMEM267) from Bos taurus (Bovine).